The following is a 706-amino-acid chain: Elongation factor G (706 aa).

One can recognise a tr-type G domain in the interval 8–295 (ERYRNFGIMA…AVIDYLPSPL (288 aa)). GTP-binding positions include 17-24 (AHIDAGKT), 92-96 (DTPGH), and 146-149 (NKMD).

This sequence belongs to the TRAFAC class translation factor GTPase superfamily. Classic translation factor GTPase family. EF-G/EF-2 subfamily.

Its subcellular location is the cytoplasm. Functionally, catalyzes the GTP-dependent ribosomal translocation step during translation elongation. During this step, the ribosome changes from the pre-translocational (PRE) to the post-translocational (POST) state as the newly formed A-site-bound peptidyl-tRNA and P-site-bound deacylated tRNA move to the P and E sites, respectively. Catalyzes the coordinated movement of the two tRNA molecules, the mRNA and conformational changes in the ribosome. This Jannaschia sp. (strain CCS1) protein is Elongation factor G.